The primary structure comprises 213 residues: Thymidylate kinase (213 aa).

10 to 17 contacts ATP; that stretch reads GLEGAGKT.

Belongs to the thymidylate kinase family.

The enzyme catalyses dTMP + ATP = dTDP + ADP. Its function is as follows. Phosphorylation of dTMP to form dTDP in both de novo and salvage pathways of dTTP synthesis. In Escherichia coli O6:K15:H31 (strain 536 / UPEC), this protein is Thymidylate kinase.